Here is a 439-residue protein sequence, read N- to C-terminus: Ornithine aminotransferase, mitochondrial (439 aa).

The N-terminal 25 residues, Met-1 to Ala-25, are a transit peptide targeting the mitochondrion. An N6-acetyllysine mark is found at Lys-49 and Lys-66. Lys-102 carries the post-translational modification N6-succinyllysine. Lys-107 carries the N6-acetyllysine; alternate modification. The residue at position 107 (Lys-107) is an N6-succinyllysine; alternate. Lys-292 is subject to N6-(pyridoxal phosphate)lysine. Position 362 is an N6-acetyllysine; alternate (Lys-362). At Lys-362 the chain carries N6-succinyllysine; alternate. 2 positions are modified to N6-acetyllysine: Lys-386 and Lys-392. Lys-405 is subject to N6-acetyllysine; alternate. An N6-succinyllysine; alternate modification is found at Lys-405. N6-acetyllysine is present on Lys-421.

Belongs to the class-III pyridoxal-phosphate-dependent aminotransferase family. As to quaternary structure, homohexamer. The cofactor is pyridoxal 5'-phosphate.

It is found in the mitochondrion matrix. The enzyme catalyses L-ornithine + 2-oxoglutarate = L-glutamate 5-semialdehyde + L-glutamate. The protein operates within amino-acid biosynthesis; L-proline biosynthesis; L-glutamate 5-semialdehyde from L-ornithine: step 1/1. Functionally, catalyzes the reversible interconversion of L-ornithine and 2-oxoglutarate to L-glutamate semialdehyde and L-glutamate. The protein is Ornithine aminotransferase, mitochondrial (OAT) of Bos taurus (Bovine).